Reading from the N-terminus, the 122-residue chain is Large ribosomal subunit protein uL14c (122 aa).

Belongs to the universal ribosomal protein uL14 family. As to quaternary structure, part of the 50S ribosomal subunit.

The protein localises to the plastid. It localises to the chloroplast. Binds to 23S rRNA. The protein is Large ribosomal subunit protein uL14c of Lactuca sativa (Garden lettuce).